Consider the following 188-residue polypeptide: NADH-quinone oxidoreductase subunit B 1 (188 aa).

C32, C33, C98, and C128 together coordinate [4Fe-4S] cluster. The segment at 153–188 (VGGVSRPDALASPADALPPRAADSLTAPPVRPPDPS) is disordered. Residues 157–177 (SRPDALASPADALPPRAADSL) show a composition bias toward low complexity.

This sequence belongs to the complex I 20 kDa subunit family. NDH-1 is composed of 14 different subunits. Subunits NuoB, C, D, E, F, and G constitute the peripheral sector of the complex. The cofactor is [4Fe-4S] cluster.

The protein resides in the cell membrane. The enzyme catalyses a quinone + NADH + 5 H(+)(in) = a quinol + NAD(+) + 4 H(+)(out). NDH-1 shuttles electrons from NADH, via FMN and iron-sulfur (Fe-S) centers, to quinones in the respiratory chain. The immediate electron acceptor for the enzyme in this species is believed to be a menaquinone. Couples the redox reaction to proton translocation (for every two electrons transferred, four hydrogen ions are translocated across the cytoplasmic membrane), and thus conserves the redox energy in a proton gradient. The chain is NADH-quinone oxidoreductase subunit B 1 (nuoB1) from Salinispora tropica (strain ATCC BAA-916 / DSM 44818 / JCM 13857 / NBRC 105044 / CNB-440).